The primary structure comprises 493 residues: MVLLWALFLALLAGAHAELPGCKIRVTSAALDLVKQEGLRFLEQELETITIPDVYGAKGHFYYNISDVRVTQLHLISSELHFQPDQDLLLNISNASLGLHFRRQLLYWFLYDGGYINASAEGVSIRTGLQLSQDSSGRIKVSNVSCEASVSKMNMAFGGTFRRMYNFFSTFITSGMRFLLNQQICPVLYHAGTVLLNSLLDTVPVRSSVDDLVGIDYSLLKDPVVSNGNLDMEFRGAFFPLKEDNWSLPNRAVEPQLEDDERMVYVAFSEFFFDSAMESYFQAGALQLTLVGDKVPSDLDMLLRATYFGSIVLLSPTVINSPLKLKLEATSPPRCTIKPSGTTISITASVTITLAPPMLPEVELSKMIMEGRLSAKLTLRGKALRVKLDLRRFQIYSNQSALESLALIPLQAPLKTLLQIGVMPLLNERTWRGVQIPLPEGINFVREVVTNHAGFVTVGADLHFAKGLREVIDKNRPADVAASHVPPPSAAAA.

Positions 1–17 (MVLLWALFLALLAGAHA) are cleaved as a signal peptide. Residues N64, N91, N94, N117, and N143 are each glycosylated (N-linked (GlcNAc...) asparagine). Residues C146 and C185 are joined by a disulfide bond. N245 and N398 each carry an N-linked (GlcNAc...) asparagine glycan.

Belongs to the BPI/LBP/Plunc superfamily. BPI/LBP family. Glycosylation is necessary for secretion and its phospholipid transfer activity. In terms of tissue distribution, highest level expression in the lung, brain and heart with relatively low levels in the liver, skeletal muscle and testis and very low levels found in the spleen and kidney.

It localises to the secreted. Its subcellular location is the nucleus. The catalysed reaction is a 1,2-diacyl-sn-glycero-3-phosphocholine(in) = a 1,2-diacyl-sn-glycero-3-phosphocholine(out). The enzyme catalyses a 1,2-diacyl-sn-glycero-3-phosphoethanolamine(in) = a 1,2-diacyl-sn-glycero-3-phosphoethanolamine(out). It carries out the reaction a 1,2-diacyl-sn-glycerol(in) = a 1,2-diacyl-sn-glycerol(out). It catalyses the reaction a 1,2-diacyl-sn-glycero-3-phosphate(in) = a 1,2-diacyl-sn-glycero-3-phosphate(out). The catalysed reaction is a sphingomyelin(in) = a sphingomyelin(out). The enzyme catalyses a 1,2-diacyl-sn-glycero-3-phospho-(1'-sn-glycerol)(in) = a 1,2-diacyl-sn-glycero-3-phospho-(1'-sn-glycerol)(out). It carries out the reaction a 1,2-diacyl-sn-glycero-3-phospho-(1D-myo-inositol)(in) = a 1,2-diacyl-sn-glycero-3-phospho-(1D-myo-inositol)(out). It catalyses the reaction 1-hexadecanoyl-2-(5Z,8Z,11Z,14Z-eicosatetraenoyl)-sn-glycero-3-phosphoethanolamine(in) = 1-hexadecanoyl-2-(5Z,8Z,11Z,14Z-eicosatetraenoyl)-sn-glycero-3-phosphoethanolamine(out). The catalysed reaction is N-(hexadecanoyl)-sphing-4-enine-1-phosphocholine(in) = N-(hexadecanoyl)-sphing-4-enine-1-phosphocholine(out). The enzyme catalyses 1,2-dihexadecanoyl-sn-glycero-3-phosphocholine(in) = 1,2-dihexadecanoyl-sn-glycero-3-phosphocholine(out). In terms of biological role, mediates the transfer of phospholipids and free cholesterol from triglyceride-rich lipoproteins (low density lipoproteins or LDL and very low density lipoproteins or VLDL) into high-density lipoproteins (HDL) as well as the exchange of phospholipids between triglyceride-rich lipoproteins themselves. Facilitates the transfer of a spectrum of different lipid molecules, including sphingomyelin, phosphatidylcholine, phosphatidylinositol, phosphatidylglycerol, and phosphatidyl ethanolamine. Plays an important role in HDL remodeling which involves modulating the size and composition of HDL. Also plays a key role in the uptake of cholesterol from peripheral cells and tissues that is subsequently transported to the liver for degradation and excretion. Two distinct forms of PLTP exist in plasma: an active form that can transfer phosphatidylcholine from phospholipid vesicles to HDL, and an inactive form that lacks this capability. The sequence is that of Phospholipid transfer protein (Pltp) from Mus musculus (Mouse).